Consider the following 448-residue polypeptide: Chromosomal replication initiator protein DnaA 1 (448 aa).

Residues 1–76 (MLTSETQNVW…FLPVDMSGEP (76 aa)) form a domain I, interacts with DnaA modulators region. The interval 76-111 (PAIRFIIAPPQKKIIPPNHFSISSSQKEEQSPNSDV) is domain II. Positions 112–328 (KLNNNYRFEN…GAINRLSAHC (217 aa)) are domain III, AAA+ region. Positions 156, 158, 159, and 160 each coordinate ATP. A domain IV, binds dsDNA region spans residues 329–448 (RLLDLNITEE…IGMVRRNIES (120 aa)).

Belongs to the DnaA family. As to quaternary structure, oligomerizes as a right-handed, spiral filament on DNA at oriC.

It is found in the cytoplasm. Plays an essential role in the initiation and regulation of chromosomal replication. ATP-DnaA binds to the origin of replication (oriC) to initiate formation of the DNA replication initiation complex once per cell cycle. Binds the DnaA box (a 9 base pair repeat at the origin) and separates the double-stranded (ds)DNA. Forms a right-handed helical filament on oriC DNA; dsDNA binds to the exterior of the filament while single-stranded (ss)DNA is stabiized in the filament's interior. The ATP-DnaA-oriC complex binds and stabilizes one strand of the AT-rich DNA unwinding element (DUE), permitting loading of DNA polymerase. After initiation quickly degrades to an ADP-DnaA complex that is not apt for DNA replication. Binds acidic phospholipids. In Protochlamydia amoebophila (strain UWE25), this protein is Chromosomal replication initiator protein DnaA 1.